Here is a 645-residue protein sequence, read N- to C-terminus: Chaperone protein DnaK (645 aa).

Threonine 200 is subject to Phosphothreonine; by autocatalysis. The interval alanine 603–lysine 645 is disordered. Positions aspartate 609–glycine 623 are enriched in low complexity. Over residues proline 625 to lysine 645 the composition is skewed to basic and acidic residues.

This sequence belongs to the heat shock protein 70 family.

Functionally, acts as a chaperone. The chain is Chaperone protein DnaK from Anaplasma marginale (strain St. Maries).